The chain runs to 1563 residues: DNA-directed RNA polymerase subunit beta' (1563 aa).

The Zn(2+) site is built by cysteine 61, cysteine 63, cysteine 76, and cysteine 79. Residues aspartate 588, aspartate 590, and aspartate 592 each coordinate Mg(2+). Residues cysteine 925, cysteine 999, cysteine 1006, and cysteine 1009 each coordinate Zn(2+).

Belongs to the RNA polymerase beta' chain family. In terms of assembly, the RNAP catalytic core consists of 2 alpha, 1 beta, 1 beta' and 1 omega subunit. When a sigma factor is associated with the core the holoenzyme is formed, which can initiate transcription. Mg(2+) is required as a cofactor. The cofactor is Zn(2+).

It catalyses the reaction RNA(n) + a ribonucleoside 5'-triphosphate = RNA(n+1) + diphosphate. Functionally, DNA-dependent RNA polymerase catalyzes the transcription of DNA into RNA using the four ribonucleoside triphosphates as substrates. This Hydrogenobaculum sp. (strain Y04AAS1) protein is DNA-directed RNA polymerase subunit beta'.